A 217-amino-acid polypeptide reads, in one-letter code: U exon protein (217 aa).

Disordered stretches follow at residues 68-110 (SKIF…TNHG) and 170-217 (EKEA…RQGR). Polar residues predominate over residues 202-217 (GGFQQPTGANQARQGR).

This sequence belongs to the adenoviridae U exon protein family.

It localises to the host nucleus. It is found in the host nucleoplasm. The protein resides in the host nucleolus. Its function is as follows. Might play a role in viral replication since it is associated with viral replication centers. Seems to have an effect on DBP localization. The sequence is that of U exon protein from Homo sapiens (Human).